Reading from the N-terminus, the 100-residue chain is UPF0213 protein YhbQ (100 aa).

In terms of domain architecture, GIY-YIG spans 2–77; sequence TPWFLYLIRT…KQLTKRQKER (76 aa).

This sequence belongs to the UPF0213 family.

In Shigella dysenteriae serotype 1 (strain Sd197), this protein is UPF0213 protein YhbQ.